A 142-amino-acid chain; its full sequence is UPF0310 protein PYRAB08750 (142 aa).

Belongs to the UPF0310 family.

The protein is UPF0310 protein PYRAB08750 of Pyrococcus abyssi (strain GE5 / Orsay).